The primary structure comprises 456 residues: Zinc finger C2HC domain-containing protein 1C (456 aa).

Disordered regions lie at residues 16-46 (MLPH…QSLK) and 85-113 (YPHC…SSGP). Polar residues-rich tracts occupy residues 35–46 (YEQGDSSQQSLK) and 90–102 (GISQ…DSQG). Residues 211-265 (VQIRRLEAAGESLEEEIRRKQILLRGKLKKTEEELRRIQTQKEQAKENENGELQK) adopt a coiled-coil conformation. The interval 336 to 388 (NKIRDPVSEPSVEKFSPPSETPVGALQGSARNSSLSMAPDSSGSSGSIEEPQL) is disordered. Residues 368-382 (SSLSMAPDSSGSSGS) are compositionally biased toward low complexity. The C2HC/C3H-type zinc finger occupies 387–416 (QLGECSHCGRKFLSFRLERHSNICSRMRGS). C391, C394, H406, and C410 together coordinate Zn(2+).

It belongs to the ZC2HC1 family. It depends on Zn(2+) as a cofactor.

This chain is Zinc finger C2HC domain-containing protein 1C (ZC2HC1C), found in Homo sapiens (Human).